Reading from the N-terminus, the 548-residue chain is Probable aquaglyceroporin-4 (548 aa).

The span at 1-22 (MAGTQDQSQDYFSKPTTPSTPG) shows a compositional bias: polar residues. Disordered stretches follow at residues 1–63 (MAGT…LPST), 76–101 (SRGF…SHFH), and 158–270 (KEET…ESGD). Over 1–290 (MAGTQDQSQD…ARLRARHPEP (290 aa)) the chain is Cytoplasmic. Over residues 38–48 (PDRESGTERAK) the composition is skewed to basic and acidic residues. Composition is skewed to polar residues over residues 77–97 (RGFS…PQHS) and 171–200 (SRTT…SRTT). Residues 249–265 (PDFKVDGEPLGHQEKPC) are compositionally biased toward basic and acidic residues. A helical transmembrane segment spans residues 291-311 (LAEFLATAVAIFLGLTGTLSV). Asparagine 312 carries N-linked (GlcNAc...) asparagine glycosylation. The Extracellular segment spans residues 312–327 (NLSATQSQPYGTYETS). A helical membrane pass occupies residues 328 to 348 (CWAWGFAWMFGIYLGGGVSGA). Topologically, residues 349–369 (HMNPAISVSLSIFRGFPWRQC) are cytoplasmic. An NPA 1 motif is present at residues 351–353 (NPA). A helical membrane pass occupies residues 370–390 (VIYVFVQFIASIVAGALAYAM). Residues 391-420 (YADSINHVDPDMTKMSMTFFSTPREWVTLK) are Extracellular-facing. A helical transmembrane segment spans residues 421-441 (SAFFNQVVGSAIMMIAVFALG). Residues 442–448 (DDQNNPP) lie on the Cytoplasmic side of the membrane. Residues 449-469 (GAGMHALVLGFLVTTLKFTLG) form a helical membrane-spanning segment. Residues 470 to 508 (YNIGSALNPASDFGPRVIAYAVGFRGDNVFHSGWWFYGP) lie on the Extracellular side of the membrane. An NPA 2 motif is present at residues 477 to 479 (NPA). Residues 509-529 (WAATLIGSLLGCTLYDGFVFV) traverse the membrane as a helical segment. Residues 530–548 (GSESPVNFRVDKRVKKLFN) are Cytoplasmic-facing.

This sequence belongs to the MIP/aquaporin (TC 1.A.8) family.

Its subcellular location is the membrane. The enzyme catalyses H2O(in) = H2O(out). It carries out the reaction glycerol(in) = glycerol(out). Probable water/glycerol channel that may have redundant functions with FgAQP2. The chain is Probable aquaglyceroporin-4 from Gibberella zeae (strain ATCC MYA-4620 / CBS 123657 / FGSC 9075 / NRRL 31084 / PH-1) (Wheat head blight fungus).